Here is a 273-residue protein sequence, read N- to C-terminus: Putative phosphoenolpyruvate synthase regulatory protein (273 aa).

153 to 160 lines the ADP pocket; the sequence is GVSRCGKT.

It belongs to the pyruvate, phosphate/water dikinase regulatory protein family. PSRP subfamily.

The catalysed reaction is [pyruvate, water dikinase] + ADP = [pyruvate, water dikinase]-phosphate + AMP + H(+). It carries out the reaction [pyruvate, water dikinase]-phosphate + phosphate + H(+) = [pyruvate, water dikinase] + diphosphate. Its function is as follows. Bifunctional serine/threonine kinase and phosphorylase involved in the regulation of the phosphoenolpyruvate synthase (PEPS) by catalyzing its phosphorylation/dephosphorylation. The polypeptide is Putative phosphoenolpyruvate synthase regulatory protein (Sodalis glossinidius (strain morsitans)).